We begin with the raw amino-acid sequence, 202 residues long: Large ribosomal subunit protein eL13 (202 aa).

It belongs to the eukaryotic ribosomal protein eL13 family.

This chain is Large ribosomal subunit protein eL13 (RPL13), found in Nicotiana tabacum (Common tobacco).